The primary structure comprises 71 residues: Heat-stable enterotoxin A (71 aa).

An N-terminal signal peptide occupies residues 1–19 (MKKIVFVLVLMLSSFGAFG). A propeptide spanning residues 20-53 (QETVSGQFSDALSTPITAEVYKQACDPPLPPAEV) is cleaved from the precursor. 3 disulfide bridges follow: Cys59/Cys64, Cys60/Cys68, and Cys63/Cys71.

The protein belongs to the heat-stable enterotoxin family.

It localises to the secreted. Its function is as follows. Toxin which activates the particulate form of guanylate cyclase and increases cyclic GMP levels within the host intestinal epithelial cells. This Yersinia enterocolitica protein is Heat-stable enterotoxin A (ystA).